A 191-amino-acid polypeptide reads, in one-letter code: Peptidyl-tRNA hydrolase (191 aa).

TRNA is bound at residue Y16. H21 serves as the catalytic Proton acceptor. Residues Y67, N69, and N115 each coordinate tRNA.

The protein belongs to the PTH family. Monomer.

It localises to the cytoplasm. The catalysed reaction is an N-acyl-L-alpha-aminoacyl-tRNA + H2O = an N-acyl-L-amino acid + a tRNA + H(+). Functionally, hydrolyzes ribosome-free peptidyl-tRNAs (with 1 or more amino acids incorporated), which drop off the ribosome during protein synthesis, or as a result of ribosome stalling. Catalyzes the release of premature peptidyl moieties from peptidyl-tRNA molecules trapped in stalled 50S ribosomal subunits, and thus maintains levels of free tRNAs and 50S ribosomes. The protein is Peptidyl-tRNA hydrolase of Wigglesworthia glossinidia brevipalpis.